The chain runs to 878 residues: Aminopeptidase M1-A (878 aa).

Residues 105–212 (VGEGTLVIAF…MSTYLVAVIV (108 aa)) are required for membrane association. Residues glutamate 145 and 278-282 (GAMEN) each bind substrate. Histidine 314 contacts Zn(2+). Glutamate 315 (proton acceptor) is an active-site residue. Zn(2+) is bound by residues histidine 318 and glutamate 337. The Dileucine internalization motif motif lies at 727-728 (LL).

Belongs to the peptidase M1 family. In terms of assembly, homodimer. Requires Zn(2+) as cofactor.

The protein localises to the membrane. It localises to the microsome membrane. The protein resides in the cytoplasm. The catalysed reaction is Release of an N-terminal amino acid, Xaa-|-Yaa- from a peptide, amide or arylamide. Xaa is preferably Ala, but may be most amino acids including Pro (slow action). When a terminal hydrophobic residue is followed by a prolyl residue, the two may be released as an intact Xaa-Pro dipeptide.. In Oryza sativa subsp. japonica (Rice), this protein is Aminopeptidase M1-A.